We begin with the raw amino-acid sequence, 273 residues long: 4-hydroxy-tetrahydrodipicolinate reductase (273 aa).

NAD(+) is bound by residues 8–13 (GALGRM), Asp-35, 103–105 (GTT), and 129–132 (SQNY). The Proton donor/acceptor role is filled by His-161. A (S)-2,3,4,5-tetrahydrodipicolinate-binding site is contributed by His-162. Catalysis depends on Lys-165, which acts as the Proton donor. 171–172 (GT) is a (S)-2,3,4,5-tetrahydrodipicolinate binding site.

The protein belongs to the DapB family.

It localises to the cytoplasm. It carries out the reaction (S)-2,3,4,5-tetrahydrodipicolinate + NAD(+) + H2O = (2S,4S)-4-hydroxy-2,3,4,5-tetrahydrodipicolinate + NADH + H(+). The catalysed reaction is (S)-2,3,4,5-tetrahydrodipicolinate + NADP(+) + H2O = (2S,4S)-4-hydroxy-2,3,4,5-tetrahydrodipicolinate + NADPH + H(+). It functions in the pathway amino-acid biosynthesis; L-lysine biosynthesis via DAP pathway; (S)-tetrahydrodipicolinate from L-aspartate: step 4/4. In terms of biological role, catalyzes the conversion of 4-hydroxy-tetrahydrodipicolinate (HTPA) to tetrahydrodipicolinate. In Methanococcus aeolicus (strain ATCC BAA-1280 / DSM 17508 / OCM 812 / Nankai-3), this protein is 4-hydroxy-tetrahydrodipicolinate reductase.